Reading from the N-terminus, the 144-residue chain is AP-4 complex subunit sigma-1 (144 aa).

Belongs to the adaptor complexes small subunit family. In terms of assembly, adaptor protein complex 4 (AP-4) is a heterotetramer composed of two large adaptins (epsilon-type subunit AP4E1 and beta-type subunit AP4B1), a medium adaptin (mu-type subunit AP4M1) and a small adaptin (sigma-type AP4S1). In terms of tissue distribution, widely expressed.

It localises to the golgi apparatus. The protein resides in the trans-Golgi network membrane. Its function is as follows. Component of the adaptor protein complex 4 (AP-4). Adaptor protein complexes are vesicle coat components involved both in vesicle formation and cargo selection. They control the vesicular transport of proteins in different trafficking pathways. AP-4 forms a non clathrin-associated coat on vesicles departing the trans-Golgi network (TGN) and may be involved in the targeting of proteins from the trans-Golgi network (TGN) to the endosomal-lysosomal system. It is also involved in protein sorting to the basolateral membrane in epithelial cells and the proper asymmetric localization of somatodendritic proteins in neurons. AP-4 is involved in the recognition and binding of tyrosine-based sorting signals found in the cytoplasmic part of cargos, but may also recognize other types of sorting signal. The polypeptide is AP-4 complex subunit sigma-1 (Homo sapiens (Human)).